The primary structure comprises 143 residues: Ribonuclease P protein component 2 (143 aa).

It belongs to the eukaryotic/archaeal RNase P protein component 2 family. As to quaternary structure, consists of a catalytic RNA component and at least 4-5 protein subunits.

The protein localises to the cytoplasm. The enzyme catalyses Endonucleolytic cleavage of RNA, removing 5'-extranucleotides from tRNA precursor.. Functionally, part of ribonuclease P, a protein complex that generates mature tRNA molecules by cleaving their 5'-ends. This is Ribonuclease P protein component 2 from Saccharolobus solfataricus (strain ATCC 35092 / DSM 1617 / JCM 11322 / P2) (Sulfolobus solfataricus).